Reading from the N-terminus, the 468-residue chain is Aspartate ammonia-lyase (468 aa).

5 residues coordinate L-aspartate: T99, S138, T139, N140, and T185. The segment at 315 to 324 (GSSIMPGKVN) is SS loop. The active-site Proton acceptor is S316. 2 residues coordinate L-aspartate: S317 and K322.

This sequence belongs to the class-II fumarase/aspartase family. Aspartase subfamily. As to quaternary structure, homotetramer.

The enzyme catalyses L-aspartate = fumarate + NH4(+). In terms of biological role, catalyzes the reversible conversion of L-aspartate to fumarate and ammonia. This chain is Aspartate ammonia-lyase (aspA), found in Helicobacter pylori (strain ATCC 700392 / 26695) (Campylobacter pylori).